Here is a 196-residue protein sequence, read N- to C-terminus: MAITSKMVKELRDKTAAGMMDCKKALTETDGDMEKAVDLLRQKGLAVAAKRAGRATSEGTIQTYIHGAKIGVMIEVGCETDFVAKNEEFCKFAKDIAMHIAAVNPIAVSREGIPAEVIEREKAIYVQQALDSGKPEAIVEKMVVGKVEKFIGEICLVEQKFVMNPDLTVQDLLNELVAKMGENISIKRFARFQVGA.

Residues 80–83 are involved in Mg(2+) ion dislocation from EF-Tu; that stretch reads TDFV.

It belongs to the EF-Ts family.

The protein localises to the cytoplasm. Associates with the EF-Tu.GDP complex and induces the exchange of GDP to GTP. It remains bound to the aminoacyl-tRNA.EF-Tu.GTP complex up to the GTP hydrolysis stage on the ribosome. This Desulfotalea psychrophila (strain LSv54 / DSM 12343) protein is Elongation factor Ts.